The chain runs to 1141 residues: Putative late blight resistance protein homolog R1B-13 (1141 aa).

Residues 417-437 (DSLAFLKNQIQVIQMEFEILQ) adopt a coiled-coil conformation. The NB-ARC domain maps to 516–742 (TVITHTSSQL…LSIVLVADVL (227 aa)). 5 LRR repeats span residues 826–851 (FKFLKVLDLEHQVVIDFIPTELPYLR), 869–894 (LWNLETLILKGTSAKTLLLPSTVWDM), 992–1016 (APNLKYLKLSGYYLDSQYLSETVDH), 1017–1041 (LKHLEVLKLYNVEFGDYREWEVSNG), and 1043–1068 (FPQLKILKLENLSLMKWIVADDAFPI).

This sequence belongs to the disease resistance NB-LRR family.

It is found in the cytoplasm. Its subcellular location is the membrane. Confers resistance to late blight (Phytophthora infestans) races carrying the avirulence gene Avr1. Resistance proteins guard the plant against pathogens that contain an appropriate avirulence protein via an indirect interaction with this avirulence protein. That triggers a defense system including the hypersensitive response, which restricts the pathogen growth. This chain is Putative late blight resistance protein homolog R1B-13 (R1B-13), found in Solanum demissum (Wild potato).